The chain runs to 477 residues: UDP-N-acetylmuramate--L-alanine ligase (477 aa).

ATP is bound at residue 122-128 (GTHGKTT).

Belongs to the MurCDEF family.

The protein localises to the cytoplasm. The enzyme catalyses UDP-N-acetyl-alpha-D-muramate + L-alanine + ATP = UDP-N-acetyl-alpha-D-muramoyl-L-alanine + ADP + phosphate + H(+). The protein operates within cell wall biogenesis; peptidoglycan biosynthesis. Cell wall formation. This is UDP-N-acetylmuramate--L-alanine ligase from Xanthomonas euvesicatoria pv. vesicatoria (strain 85-10) (Xanthomonas campestris pv. vesicatoria).